We begin with the raw amino-acid sequence, 71 residues long: uncharacterized protein (71 aa).

The protein belongs to the ycf40 family.

It localises to the plastid. The protein resides in the chloroplast. This is an uncharacterized protein from Pyropia yezoensis (Susabi-nori).